Consider the following 239-residue polypeptide: RNA polymerase sigma factor FliA (239 aa).

Residues 16 to 88 form a sigma-70 factor domain-2 region; sequence LWQRYVPLVR…MLDELRSRDW (73 aa). An Interaction with polymerase core subunit RpoC motif is present at residues 43 to 46; the sequence is DLLQ. Residues 96 to 166 are sigma-70 factor domain-3; sequence NAREVAQAIG…IELVTDDHQR (71 aa). The segment at 185-233 is sigma-70 factor domain-4; it reads AIETLPEREKLVLTLYYQEELNLKEIGAVLEVGESRVSQLHSQAIKRLR. A DNA-binding region (H-T-H motif) is located at residues 207–226; the sequence is LKEIGAVLEVGESRVSQLHS.

The protein belongs to the sigma-70 factor family. FliA subfamily.

It is found in the cytoplasm. Functionally, sigma factors are initiation factors that promote the attachment of RNA polymerase to specific initiation sites and are then released. This sigma factor controls the expression of flagella-related genes. This chain is RNA polymerase sigma factor FliA, found in Escherichia coli O157:H7.